The sequence spans 391 residues: MKIVLAYSGGLDTTVSIRWLKETFKAEIITVTVDVGQKDDFKKIEERAYIAGASKHYTIDAVRQFANNYIAYAIKLNGLYEGVYPLSTALARPLIAEKVVEVAKKEGAEAVAHGSTSKGNDQVRFDLAVKALYPDVKIIAPARIWNMTREDEIKYAKEKGIPIKVESDKYSIDENLWGRSIEGDIISDPSLEVPEDAFEWTKQIYNKKEIVSIEFSNGVPTAVNGEKMELNKLVDFLNLKFGSHGFGRVEHIENRVVGFKSREVYEVPAALGLIYAHIDLEKTIYTPMELRFKRHIDQLWSDLVYQGLWFEPLRETLHKVADEMNKWISGEAKVEVSNGSFRIVGRESEYSPYSEKIASYNKGWYPSDEMARGFIEIWGMHSLIARRVRGL.

6–14 is an ATP binding site; it reads AYSGGLDTT. Tyrosine 84 is an L-citrulline binding site. An ATP-binding site is contributed by glycine 114. Residues threonine 116, asparagine 120, and aspartate 121 each coordinate L-aspartate. Asparagine 120 serves as a coordination point for L-citrulline. L-citrulline contacts are provided by arginine 124, serine 171, serine 180, glutamate 253, and tyrosine 265.

Belongs to the argininosuccinate synthase family. Type 1 subfamily. Homotetramer.

The protein localises to the cytoplasm. The enzyme catalyses L-citrulline + L-aspartate + ATP = 2-(N(omega)-L-arginino)succinate + AMP + diphosphate + H(+). The protein operates within amino-acid biosynthesis; L-arginine biosynthesis; L-arginine from L-ornithine and carbamoyl phosphate: step 2/3. In Saccharolobus solfataricus (strain ATCC 35092 / DSM 1617 / JCM 11322 / P2) (Sulfolobus solfataricus), this protein is Argininosuccinate synthase.